The sequence spans 287 residues: uncharacterized protein (287 aa).

Residues 43–50 (GKTGAGKS), 90–93 (DLPG), and 156–159 (DKAE) contribute to the GTP site. The region spanning 48–140 (GKSSLCNALF…TDEHFYRQVI (93 aa)) is the G domain.

It to E.coli YkfA and YeeP.

This is an uncharacterized protein from Escherichia coli (strain K12).